The following is a 233-amino-acid chain: GSK-3-binding protein FRAT2 (233 aa).

Residues 1–24 are disordered; sequence MPCRREEEEEAGEEAEGEEEEDDS. Positions 7–24 are enriched in acidic residues; that stretch reads EEEEAGEEAEGEEEEDDS. Positions 174–196 are involved in GSK-3 binding; that stretch reads DPHRLLQQLVLSGNLIKEAVRRL. A disordered region spans residues 204–233; the sequence is AATGPASAPGPGGGRSGPDRIALQPSGSLL.

This sequence belongs to the GSK-3-binding protein family. Binds GSK-3 and prevents GSK-3-dependent phosphorylation.

In terms of biological role, positively regulates the Wnt signaling pathway by stabilizing beta-catenin through the association with GSK-3. The sequence is that of GSK-3-binding protein FRAT2 (FRAT2) from Homo sapiens (Human).